The following is a 65-amino-acid chain: Large ribosomal subunit protein uL29 (65 aa).

It belongs to the universal ribosomal protein uL29 family.

The polypeptide is Large ribosomal subunit protein uL29 (Buchnera aphidicola subsp. Acyrthosiphon pisum (strain 5A)).